The following is a 124-amino-acid chain: Small ribosomal subunit protein bS16 (124 aa).

The segment at 88–124 (VPEQTKQAQPKAKAQERLREAEEKARAAAEAAASAEG) is disordered. Residues 100–114 (KAQERLREAEEKARA) are compositionally biased toward basic and acidic residues. A compositionally biased stretch (low complexity) spans 115–124 (AAEAAASAEG).

Belongs to the bacterial ribosomal protein bS16 family.

This Rhodospirillum rubrum (strain ATCC 11170 / ATH 1.1.1 / DSM 467 / LMG 4362 / NCIMB 8255 / S1) protein is Small ribosomal subunit protein bS16.